A 573-amino-acid polypeptide reads, in one-letter code: Sulfite reductase [NADPH] hemoprotein beta-component (573 aa).

Cysteine 438, cysteine 444, cysteine 483, and cysteine 487 together coordinate [4Fe-4S] cluster. Cysteine 487 is a siroheme binding site.

It belongs to the nitrite and sulfite reductase 4Fe-4S domain family. Alpha(8)-beta(8). The alpha component is a flavoprotein, the beta component is a hemoprotein. The cofactor is siroheme. It depends on [4Fe-4S] cluster as a cofactor.

The enzyme catalyses hydrogen sulfide + 3 NADP(+) + 3 H2O = sulfite + 3 NADPH + 4 H(+). It functions in the pathway sulfur metabolism; hydrogen sulfide biosynthesis; hydrogen sulfide from sulfite (NADPH route): step 1/1. Functionally, component of the sulfite reductase complex that catalyzes the 6-electron reduction of sulfite to sulfide. This is one of several activities required for the biosynthesis of L-cysteine from sulfate. The sequence is that of Sulfite reductase [NADPH] hemoprotein beta-component from Shouchella clausii (strain KSM-K16) (Alkalihalobacillus clausii).